Consider the following 1211-residue polypeptide: DNA-directed RNA polymerase subunit beta' (1211 aa).

Residues Cys-60, Cys-62, Cys-75, and Cys-78 each contribute to the Zn(2+) site. Positions 449, 451, and 453 each coordinate Mg(2+). 4 residues coordinate Zn(2+): Cys-818, Cys-892, Cys-899, and Cys-902.

It belongs to the RNA polymerase beta' chain family. In terms of assembly, the RNAP catalytic core consists of 2 alpha, 1 beta, 1 beta' and 1 omega subunit. When a sigma factor is associated with the core the holoenzyme is formed, which can initiate transcription. Mg(2+) is required as a cofactor. Requires Zn(2+) as cofactor.

The enzyme catalyses RNA(n) + a ribonucleoside 5'-triphosphate = RNA(n+1) + diphosphate. DNA-dependent RNA polymerase catalyzes the transcription of DNA into RNA using the four ribonucleoside triphosphates as substrates. This chain is DNA-directed RNA polymerase subunit beta', found in Limosilactobacillus reuteri (strain DSM 20016) (Lactobacillus reuteri).